We begin with the raw amino-acid sequence, 499 residues long: Bifunctional purine biosynthesis protein PurH (499 aa).

Residues 1–144 (MIKRALISVF…KNFKDVVVLT (144 aa)) form the MGS-like domain.

It belongs to the PurH family.

It carries out the reaction (6R)-10-formyltetrahydrofolate + 5-amino-1-(5-phospho-beta-D-ribosyl)imidazole-4-carboxamide = 5-formamido-1-(5-phospho-D-ribosyl)imidazole-4-carboxamide + (6S)-5,6,7,8-tetrahydrofolate. The enzyme catalyses IMP + H2O = 5-formamido-1-(5-phospho-D-ribosyl)imidazole-4-carboxamide. Its pathway is purine metabolism; IMP biosynthesis via de novo pathway; 5-formamido-1-(5-phospho-D-ribosyl)imidazole-4-carboxamide from 5-amino-1-(5-phospho-D-ribosyl)imidazole-4-carboxamide (10-formyl THF route): step 1/1. The protein operates within purine metabolism; IMP biosynthesis via de novo pathway; IMP from 5-formamido-1-(5-phospho-D-ribosyl)imidazole-4-carboxamide: step 1/1. The chain is Bifunctional purine biosynthesis protein PurH from Clostridium botulinum (strain Langeland / NCTC 10281 / Type F).